The following is a 360-amino-acid chain: Phospho-N-acetylmuramoyl-pentapeptide-transferase (360 aa).

Transmembrane regions (helical) follow at residues 24 to 44, 69 to 89, 92 to 112, 133 to 153, 158 to 178, 199 to 219, 239 to 259, 263 to 283, 288 to 308, and 337 to 357; these read RAVM…PWTI, GTPT…TLLW, WANP…ALGF, MVWQ…LAAN, ILIV…GFLV, GLAT…AYAS, VVIF…FNAY, VFMG…VAVI, FVLV…MLQV, and QVVV…LSTL.

Belongs to the glycosyltransferase 4 family. MraY subfamily. The cofactor is Mg(2+).

It is found in the cell inner membrane. The enzyme catalyses UDP-N-acetyl-alpha-D-muramoyl-L-alanyl-gamma-D-glutamyl-meso-2,6-diaminopimeloyl-D-alanyl-D-alanine + di-trans,octa-cis-undecaprenyl phosphate = di-trans,octa-cis-undecaprenyl diphospho-N-acetyl-alpha-D-muramoyl-L-alanyl-D-glutamyl-meso-2,6-diaminopimeloyl-D-alanyl-D-alanine + UMP. It functions in the pathway cell wall biogenesis; peptidoglycan biosynthesis. Catalyzes the initial step of the lipid cycle reactions in the biosynthesis of the cell wall peptidoglycan: transfers peptidoglycan precursor phospho-MurNAc-pentapeptide from UDP-MurNAc-pentapeptide onto the lipid carrier undecaprenyl phosphate, yielding undecaprenyl-pyrophosphoryl-MurNAc-pentapeptide, known as lipid I. The sequence is that of Phospho-N-acetylmuramoyl-pentapeptide-transferase from Neisseria meningitidis serogroup A / serotype 4A (strain DSM 15465 / Z2491).